Reading from the N-terminus, the 261-residue chain is Cytochrome c oxidase subunit 3 (261 aa).

Residues 1–15 (MTHQTHAYHMVNPSP) lie on the Mitochondrial matrix side of the membrane. A helical transmembrane segment spans residues 16–34 (WPLTGALSALLMTSGLIMW). Topologically, residues 35-40 (FHFNST) are mitochondrial intermembrane. The chain crosses the membrane as a helical span at residues 41-66 (TLLMLGLTTNMLTMYQWWRDIIREST). Residues 67-72 (FQGHHT) lie on the Mitochondrial matrix side of the membrane. The chain crosses the membrane as a helical span at residues 73-105 (PSVQKGLRYGMILFIISEVLFFTGFFWAFYHSS). Over 106–128 (LAPTPELGGCWPPTGIHPLNPLE) the chain is Mitochondrial intermembrane. A helical transmembrane segment spans residues 129-152 (VPLLNTSVLLASGVSITWAHHSLM). Topologically, residues 153 to 155 (EGN) are mitochondrial matrix. Residues 156–183 (RNHMLQALFITIALGVYFTLLQASEYYE) form a helical membrane-spanning segment. At 184-190 (APFTISD) the chain is on the mitochondrial intermembrane side. Residues 191–223 (GVYGSTFFVATGFHGLHVIIGSTFLIVCFFRQL) form a helical membrane-spanning segment. Residues 224 to 232 (KFHFTSNHH) lie on the Mitochondrial matrix side of the membrane. A helical membrane pass occupies residues 233-256 (FGFEAAAWYWHFVDVVWLFLYVSI). Residues 257–261 (YWWGS) lie on the Mitochondrial intermembrane side of the membrane.

It belongs to the cytochrome c oxidase subunit 3 family. Component of the cytochrome c oxidase (complex IV, CIV), a multisubunit enzyme composed of 14 subunits. The complex is composed of a catalytic core of 3 subunits MT-CO1, MT-CO2 and MT-CO3, encoded in the mitochondrial DNA, and 11 supernumerary subunits COX4I, COX5A, COX5B, COX6A, COX6B, COX6C, COX7A, COX7B, COX7C, COX8 and NDUFA4, which are encoded in the nuclear genome. The complex exists as a monomer or a dimer and forms supercomplexes (SCs) in the inner mitochondrial membrane with NADH-ubiquinone oxidoreductase (complex I, CI) and ubiquinol-cytochrome c oxidoreductase (cytochrome b-c1 complex, complex III, CIII), resulting in different assemblies (supercomplex SCI(1)III(2)IV(1) and megacomplex MCI(2)III(2)IV(2)).

The protein localises to the mitochondrion inner membrane. It carries out the reaction 4 Fe(II)-[cytochrome c] + O2 + 8 H(+)(in) = 4 Fe(III)-[cytochrome c] + 2 H2O + 4 H(+)(out). Its function is as follows. Component of the cytochrome c oxidase, the last enzyme in the mitochondrial electron transport chain which drives oxidative phosphorylation. The respiratory chain contains 3 multisubunit complexes succinate dehydrogenase (complex II, CII), ubiquinol-cytochrome c oxidoreductase (cytochrome b-c1 complex, complex III, CIII) and cytochrome c oxidase (complex IV, CIV), that cooperate to transfer electrons derived from NADH and succinate to molecular oxygen, creating an electrochemical gradient over the inner membrane that drives transmembrane transport and the ATP synthase. Cytochrome c oxidase is the component of the respiratory chain that catalyzes the reduction of oxygen to water. Electrons originating from reduced cytochrome c in the intermembrane space (IMS) are transferred via the dinuclear copper A center (CU(A)) of subunit 2 and heme A of subunit 1 to the active site in subunit 1, a binuclear center (BNC) formed by heme A3 and copper B (CU(B)). The BNC reduces molecular oxygen to 2 water molecules using 4 electrons from cytochrome c in the IMS and 4 protons from the mitochondrial matrix. This is Cytochrome c oxidase subunit 3 (MT-CO3) from Pelea capreolus (Gray rhebok).